Here is a 232-residue protein sequence, read N- to C-terminus: GTP cyclohydrolase III (232 aa).

This sequence belongs to the archaeal-type GTP cyclohydrolase family.

The enzyme catalyses GTP + 3 H2O = 2-amino-5-formylamino-6-(5-phospho-D-ribosylamino)pyrimidin-4(3H)-one + 2 phosphate + 2 H(+). In terms of biological role, catalyzes the formation of 2-amino-5-formylamino-6-ribofuranosylamino-4(3H)-pyrimidinone ribonucleotide monophosphate and inorganic phosphate from GTP. Also has an independent pyrophosphate phosphohydrolase activity. This is GTP cyclohydrolase III from Saccharolobus islandicus (strain Y.N.15.51 / Yellowstone #2) (Sulfolobus islandicus).